We begin with the raw amino-acid sequence, 941 residues long: Isoleucine--tRNA ligase (941 aa).

A 'HIGH' region motif is present at residues 59–69 (PYANGNIHIGH). Glu562 is a binding site for L-isoleucyl-5'-AMP. The 'KMSKS' region motif lies at 603–607 (KMSKS). Lys606 contacts ATP. Residues Cys904, Cys907, Cys924, and Cys927 each contribute to the Zn(2+) site.

This sequence belongs to the class-I aminoacyl-tRNA synthetase family. IleS type 1 subfamily. As to quaternary structure, monomer. Zn(2+) serves as cofactor.

Its subcellular location is the cytoplasm. The catalysed reaction is tRNA(Ile) + L-isoleucine + ATP = L-isoleucyl-tRNA(Ile) + AMP + diphosphate. In terms of biological role, catalyzes the attachment of isoleucine to tRNA(Ile). As IleRS can inadvertently accommodate and process structurally similar amino acids such as valine, to avoid such errors it has two additional distinct tRNA(Ile)-dependent editing activities. One activity is designated as 'pretransfer' editing and involves the hydrolysis of activated Val-AMP. The other activity is designated 'posttransfer' editing and involves deacylation of mischarged Val-tRNA(Ile). This is Isoleucine--tRNA ligase from Haemophilus influenzae (strain ATCC 51907 / DSM 11121 / KW20 / Rd).